The sequence spans 39 residues: Photosystem II reaction center protein J (39 aa).

Residues 7–27 (IPLWIVATVAGTGALVVVGLF) form a helical membrane-spanning segment.

Belongs to the PsbJ family. PSII is composed of 1 copy each of membrane proteins PsbA, PsbB, PsbC, PsbD, PsbE, PsbF, PsbH, PsbI, PsbJ, PsbK, PsbL, PsbM, PsbT, PsbX, PsbY, PsbZ, Psb30/Ycf12, peripheral proteins PsbO, CyanoQ (PsbQ), PsbU, PsbV and a large number of cofactors. It forms dimeric complexes.

The protein resides in the cellular thylakoid membrane. In terms of biological role, one of the components of the core complex of photosystem II (PSII). PSII is a light-driven water:plastoquinone oxidoreductase that uses light energy to abstract electrons from H(2)O, generating O(2) and a proton gradient subsequently used for ATP formation. It consists of a core antenna complex that captures photons, and an electron transfer chain that converts photonic excitation into a charge separation. In Synechococcus sp. (strain ATCC 27144 / PCC 6301 / SAUG 1402/1) (Anacystis nidulans), this protein is Photosystem II reaction center protein J.